The chain runs to 218 residues: Recombination protein RecR (218 aa).

The segment at 56 to 71 (CRICCNISREEVCRIC) adopts a C4-type zinc-finger fold. In terms of domain architecture, Toprim spans 79–195 (GTICVVEEPK…VVSRLASGMP (117 aa)).

The protein belongs to the RecR family.

May play a role in DNA repair. It seems to be involved in an RecBC-independent recombinational process of DNA repair. It may act with RecF and RecO. This chain is Recombination protein RecR, found in Corynebacterium glutamicum (strain R).